The chain runs to 94 residues: DNA-binding protein HU (94 aa).

Belongs to the bacterial histone-like protein family.

Functionally, histone-like DNA-binding protein which is capable of wrapping DNA to stabilize it, and thus to prevent its denaturation under extreme environmental conditions. This is DNA-binding protein HU (hup) from Xylella fastidiosa (strain 9a5c).